The following is a 480-amino-acid chain: Sulfate adenylyltransferase subunit 1 (480 aa).

The region spanning Lys-30–Lys-248 is the tr-type G domain. Residues Gly-39–Ser-46 form a G1 region. Gly-39–Ser-46 is a binding site for GTP. Positions Gly-97 to Asp-101 are G2. The tract at residues Asp-118–Gly-121 is G3. GTP is bound by residues Asp-118–His-122 and Asn-173–Asp-176. Positions Asn-173 to Asp-176 are G4. The G5 stretch occupies residues Ser-211–Leu-213.

It belongs to the TRAFAC class translation factor GTPase superfamily. Classic translation factor GTPase family. CysN/NodQ subfamily. As to quaternary structure, heterodimer composed of CysD, the smaller subunit, and CysN.

The enzyme catalyses sulfate + ATP + H(+) = adenosine 5'-phosphosulfate + diphosphate. It participates in sulfur metabolism; hydrogen sulfide biosynthesis; sulfite from sulfate: step 1/3. Its function is as follows. With CysD forms the ATP sulfurylase (ATPS) that catalyzes the adenylation of sulfate producing adenosine 5'-phosphosulfate (APS) and diphosphate, the first enzymatic step in sulfur assimilation pathway. APS synthesis involves the formation of a high-energy phosphoric-sulfuric acid anhydride bond driven by GTP hydrolysis by CysN coupled to ATP hydrolysis by CysD. The chain is Sulfate adenylyltransferase subunit 1 from Photorhabdus laumondii subsp. laumondii (strain DSM 15139 / CIP 105565 / TT01) (Photorhabdus luminescens subsp. laumondii).